A 508-amino-acid chain; its full sequence is Monocarboxylate transporter 9 (508 aa).

Helical transmembrane passes span 13–33, 53–73, 80–100, 102–122, 137–157, and 164–184; these read WVIVVVSFFTQFLCYGSPLAV, WVGSLASGVGLLASPVCSLFV, PVTIFSGFLVAGGLMLSSLAP, IYFLFFSYGIVVGLGCGLLYT, GLALGLISTGSSVGLFIYAAL, and FYGLDGCLLIVGALALNILAC. The tract at residues 242-263 is disordered; that stretch reads GDWGRETSLPKNPTGAAHTKEP. 6 consecutive transmembrane segments (helical) span residues 303-323, 341-361, 370-390, 396-416, 431-451, and 460-480; these read VFSALFVAILLFDIGGFPPSL, IPLISIFGIMTAVGKLLLGIL, LYLYVATLIITGLALCAIPLA, LAILSGILGFLTGNWSIFPYV, GILMFFAGLGNSLGPPIVGWF, and IAFYFSGFCVLLGGFILLLAI.

It belongs to the major facilitator superfamily. Monocarboxylate porter (TC 2.A.1.13) family. In terms of tissue distribution, expressed in the liver and kidneys. In the liver localizes on the sinusoidal membrane of the hepatocytes.

Its subcellular location is the cell membrane. It carries out the reaction creatine(in) = creatine(out). The catalysed reaction is (R)-carnitine(in) = (R)-carnitine(out). Functionally, extracellular pH-and Na(+)-sensitive low-affinity creatine transporter. Also functions as a pH-independent carnitine efflux transporter. The polypeptide is Monocarboxylate transporter 9 (Slc16a9) (Rattus norvegicus (Rat)).